The chain runs to 435 residues: MLDLKAVAADFESFERRLARRGEGAVQALAPVKPLAARRRELNVLLEKQKKEQAEANANIRQLARTDKDAVEGARASLRALGDEVKKTEAALGDVEAELTRLLMVVPNPPSDSVPDGKDEHDNVVVRTWGEQKAYGFTPKPHWELGEALGVLEWQQAAKLSGSRFTILKGAAARLERAIVSFFIDVHTSRGYTEILPPYLVTGETMTGTGQLPKFEEDLFKTTNEPPMYLIPTAEVPVTNMHRDEIFEASAMPVSYCAFSPCFRAEAGSAGRDTRGIMRQHQFHKVELVKLSKAEESEAEHEKMLDDACEVLRRLGLHFRVVLLCAGDMGFSSAKTYDIEVWCPGQGAYREISSVSNCEDFQARRIRVRYRGENGKPRLAHTLNGSGVAVGRTIVAILEQCQEADGTVVIPEPLRPYMGGLERIAAETFPRGVER.

233-235 (TAE) contacts L-serine. ATP is bound at residue 264 to 266 (RAE). Position 287 (glutamate 287) interacts with L-serine. 351-354 (EISS) lines the ATP pocket. Serine 386 provides a ligand contact to L-serine.

It belongs to the class-II aminoacyl-tRNA synthetase family. Type-1 seryl-tRNA synthetase subfamily. As to quaternary structure, homodimer. The tRNA molecule binds across the dimer.

The protein localises to the cytoplasm. It carries out the reaction tRNA(Ser) + L-serine + ATP = L-seryl-tRNA(Ser) + AMP + diphosphate + H(+). The enzyme catalyses tRNA(Sec) + L-serine + ATP = L-seryl-tRNA(Sec) + AMP + diphosphate + H(+). Its pathway is aminoacyl-tRNA biosynthesis; selenocysteinyl-tRNA(Sec) biosynthesis; L-seryl-tRNA(Sec) from L-serine and tRNA(Sec): step 1/1. Catalyzes the attachment of serine to tRNA(Ser). Is also able to aminoacylate tRNA(Sec) with serine, to form the misacylated tRNA L-seryl-tRNA(Sec), which will be further converted into selenocysteinyl-tRNA(Sec). In Anaeromyxobacter sp. (strain K), this protein is Serine--tRNA ligase.